We begin with the raw amino-acid sequence, 238 residues long: Fatty acid metabolism regulator protein (238 aa).

The region spanning K6–F74 is the HTH gntR-type domain. Positions E34–Q53 form a DNA-binding region, H-T-H motif.

As to quaternary structure, homodimer.

It localises to the cytoplasm. In terms of biological role, multifunctional regulator of fatty acid metabolism. This Shewanella baltica (strain OS223) protein is Fatty acid metabolism regulator protein.